The chain runs to 438 residues: Rhomboid-related protein 1 (438 aa).

Positions Met1–Ser62 are disordered. The segment covering Gly8 to Asp17 has biased composition (acidic residues). 7 consecutive transmembrane segments (helical) span residues Pro196–Ala216, Gly262–Leu282, Ile284–Met304, Val308–Met328, Leu340–Leu359, Pro372–Leu392, and Trp405–Phe425. Ser312 functions as the Nucleophile in the catalytic mechanism. The active site involves His377.

Belongs to the peptidase S54 family. As to expression, detected in heart, brain, skeletal muscle and kidney.

The protein resides in the membrane. It carries out the reaction Cleaves type-1 transmembrane domains using a catalytic dyad composed of serine and histidine that are contributed by different transmembrane domains.. In terms of biological role, may be involved in regulated intramembrane proteolysis and the subsequent release of functional polypeptides from their membrane anchors. The protein is Rhomboid-related protein 1 (RHBDL1) of Homo sapiens (Human).